The following is a 212-amino-acid chain: Protein GET1 (212 aa).

Residues 1–4 are Lumenal-facing; sequence MASL. Residues 5–24 traverse the membrane as a helical segment; that stretch reads LLFVLVIQIITYLINTIGAR. Residues 25–110 are Cytoplasmic-facing; the sequence is TIDSLLWLLY…SFDWTIKTVR (86 aa). Positions 75 to 99 form a coiled coil; it reads AKLRRRHDKAMEEYDVKNKKLSALK. A helical transmembrane segment spans residues 111–131; sequence WVSTTGVTVILQFWFSKSPIF. At 132 to 155 the chain is on the lumenal side; sequence DLPRGWLPWQVEWILSFPRAPLGT. Residues 156 to 172 traverse the membrane as a helical segment; that stretch reads VSIQVWGGACGTVIALV. The Cytoplasmic segment spans residues 173–212; the sequence is GGAMGVAAPAFKKINQPRGEAQKMGTPRGSREQTPVRKTQ. The tract at residues 189–212 is disordered; that stretch reads PRGEAQKMGTPRGSREQTPVRKTQ. The segment covering 201-212 has biased composition (basic and acidic residues); sequence GSREQTPVRKTQ.

This sequence belongs to the WRB/GET1 family. Interacts with GET3.

It is found in the endoplasmic reticulum membrane. Functionally, required for the post-translational delivery of tail-anchored (TA) proteins to the endoplasmic reticulum. Acts as a membrane receptor for soluble GET3, which recognizes and selectively binds the transmembrane domain of TA proteins in the cytosol. This is Protein GET1 from Arthroderma otae (strain ATCC MYA-4605 / CBS 113480) (Microsporum canis).